The chain runs to 224 residues: Orotate phosphoribosyltransferase (224 aa).

5-phospho-alpha-D-ribose 1-diphosphate contacts are provided by residues Lys-26, 73–74, Arg-100, Lys-101, Lys-104, His-106, and 127–135; these read YK and EDVTTSGKS. Residues Thr-131 and Arg-160 each contribute to the orotate site.

It belongs to the purine/pyrimidine phosphoribosyltransferase family. PyrE subfamily. Homodimer. Mg(2+) serves as cofactor.

The catalysed reaction is orotidine 5'-phosphate + diphosphate = orotate + 5-phospho-alpha-D-ribose 1-diphosphate. Its pathway is pyrimidine metabolism; UMP biosynthesis via de novo pathway; UMP from orotate: step 1/2. Catalyzes the transfer of a ribosyl phosphate group from 5-phosphoribose 1-diphosphate to orotate, leading to the formation of orotidine monophosphate (OMP). The chain is Orotate phosphoribosyltransferase from Clostridium botulinum (strain Eklund 17B / Type B).